Reading from the N-terminus, the 148-residue chain is Mediator of RNA polymerase II transcription subunit 31 (148 aa).

Belongs to the Mediator complex subunit 31 family. As to quaternary structure, component of the Mediator complex.

It localises to the nucleus. Component of the Mediator complex, a coactivator involved in the regulated transcription of nearly all RNA polymerase II-dependent genes. Mediator functions as a bridge to convey information from gene-specific regulatory proteins to the basal RNA polymerase II transcription machinery. Mediator is recruited to promoters by direct interactions with regulatory proteins and serves as a scaffold for the assembly of a functional preinitiation complex with RNA polymerase II and the general transcription factors. This chain is Mediator of RNA polymerase II transcription subunit 31, found in Taenia solium (Pork tapeworm).